Here is a 66-residue protein sequence, read N- to C-terminus: Xenoxin-2 (66 aa).

4 cysteine pairs are disulfide-bonded: Cys-3–Cys-24, Cys-17–Cys-37, Cys-43–Cys-58, and Cys-59–Cys-64.

In terms of tissue distribution, expressed by the skin dorsal glands.

The protein resides in the secreted. Its function is as follows. Lacks alpha-neurotoxic activity, has apparently no antibacterial activity, nor anti-coagulant potency. This chain is Xenoxin-2, found in Xenopus laevis (African clawed frog).